A 629-amino-acid chain; its full sequence is Arginine--tRNA ligase (629 aa).

The short motif at 128–138 is the 'HIGH' region element; it reads VNPTKPLHMGH.

Belongs to the class-I aminoacyl-tRNA synthetase family.

The protein resides in the cytoplasm. The enzyme catalyses tRNA(Arg) + L-arginine + ATP = L-arginyl-tRNA(Arg) + AMP + diphosphate. The chain is Arginine--tRNA ligase (argS) from Pyrococcus horikoshii (strain ATCC 700860 / DSM 12428 / JCM 9974 / NBRC 100139 / OT-3).